Consider the following 289-residue polypeptide: D-xylonolactone lactonase (289 aa).

Residue glutamate 17 participates in Fe(2+) binding. Residues arginine 98, asparagine 100, glutamate 119, and asparagine 145 each coordinate D-xylono-1,5-lactone. Fe(2+) is bound by residues asparagine 145 and aspartate 195. The Proton donor/acceptor role is filled by aspartate 195.

The protein belongs to the SMP-30/CGR1 family. Requires Fe(2+) as cofactor.

It catalyses the reaction D-xylono-1,5-lactone + H2O = D-xylonate + H(+). Involved in the degradation of D-xylose. Catalyzes the hydrolysis of D-xylonolactone to D-xylonate. This chain is D-xylonolactone lactonase, found in Caulobacter vibrioides (strain ATCC 19089 / CIP 103742 / CB 15) (Caulobacter crescentus).